Consider the following 315-residue polypeptide: Mitochondrial outer membrane import complex protein METAXIN (315 aa).

Methionine 1 bears the N-acetylmethionine mark. A coiled-coil region spans residues 157–181 (ENAEQREKQIYKRASEAYEALSTRL). The helical transmembrane segment at 195 to 215 (LDAFLLSHILFIIQALPVTSV) threads the bilayer. The interval 240–277 (ASSSSPSPPLHSFPSSFPRKSSKPKSKPKVEKTEEEKK) is disordered. A compositionally biased stretch (basic and acidic residues) spans 267 to 277 (PKVEKTEEEKK). The chain crosses the membrane as a helical span at residues 284–304 (FFLAAQFLAVVIYVSVMGGGS).

This sequence belongs to the metaxin family. Part of a high molecular weight complex that is distinct from the TOM complex. Interacts with a variety of mitochondrial precursor proteins. In terms of tissue distribution, expressed in roots, young cotyledons, flowers and leaves.

The protein resides in the mitochondrion inner membrane. The protein localises to the mitochondrion outer membrane. Functionally, involved in transport of proteins into the mitochondrion. The chain is Mitochondrial outer membrane import complex protein METAXIN (MTX1) from Arabidopsis thaliana (Mouse-ear cress).